The following is a 364-amino-acid chain: Oxidized low-density lipoprotein receptor 1 (364 aa).

The disordered stretch occupies residues 1 to 21 (MAFDDKMKPVNGQPDQKSCGK). Residues 1 to 31 (MAFDDKMKPVNGQPDQKSCGKKPKGLHLLSS) are Cytoplasmic-facing. A helical; Signal-anchor for type II membrane protein transmembrane segment spans residues 32-54 (TWWCPAAVTLAILCLVLSVTLIV). 2 S-palmitoyl cysteine lipidation sites follow: Cys35 and Cys45. Positions 55 to 242 (QQTQLLQVSD…GPCPQDWIWH (188 aa)) are neck. Residues 55-364 (QQTQLLQVSD…QKKANLLLTQ (310 aa)) are Extracellular-facing. N-linked (GlcNAc...) asparagine glycans are attached at residues Asn72, Asn92, and Asn138. Positions 83-233 (QMSAQKKAEN…ALQRAANSSG (151 aa)) form a coiled coil. A run of 3 repeats spans residues 96–141 (ESKR…NASE), 142–187 (ESKW…KYSE), and 188–233 (ESQR…NSSG). Cystine bridges form between Cys235/Cys246, Cys262/Cys354, and Cys333/Cys346. One can recognise a C-type lectin domain in the interval 242–355 (HKENCYLFHG…CILTAFSICQ (114 aa)).

In terms of assembly, homodimer; disulfide-linked. May form a hexamer composed of 3 homodimers. Interacts with HSP70. N-glycosylated. In terms of tissue distribution, predominantly expressed in lung and at lower level in kidney. Expressed in macrophages but not in vascular smooth muscle cells.

Its subcellular location is the cell membrane. It is found in the membrane raft. The protein resides in the secreted. In terms of biological role, receptor that mediates the recognition, internalization and degradation of oxidatively modified low density lipoprotein (oxLDL) by vascular endothelial cells. OxLDL is a marker of atherosclerosis that induces vascular endothelial cell activation and dysfunction, resulting in pro-inflammatory responses, pro-oxidative conditions and apoptosis. Its association with oxLDL induces the activation of NF-kappa-B through an increased production of intracellular reactive oxygen and a variety of pro-atherogenic cellular responses including a reduction of nitric oxide (NO) release, monocyte adhesion and apoptosis. In addition to binding oxLDL, it acts as a receptor for the HSP70 protein involved in antigen cross-presentation to naive T-cells in dendritic cells, thereby participating in cell-mediated antigen cross-presentation. Also involved in inflammatory process, by acting as a leukocyte-adhesion molecule at the vascular interface in endotoxin-induced inflammation. Also acts as a receptor for advanced glycation end (AGE) products, activated platelets, monocytes, apoptotic cells and both Gram-negative and Gram-positive bacteria. The chain is Oxidized low-density lipoprotein receptor 1 (Olr1) from Rattus norvegicus (Rat).